The primary structure comprises 186 residues: Tumor necrosis factor alpha-induced protein 8-like protein 1 (186 aa).

This sequence belongs to the TNFAIP8 family.

The protein resides in the cytoplasm. In Gallus gallus (Chicken), this protein is Tumor necrosis factor alpha-induced protein 8-like protein 1 (TNFAIP8L1).